A 350-amino-acid chain; its full sequence is Putative ATP-binding protein BruAb2_0487 (350 aa).

The region spanning 4–234 is the ABC transporter domain; it reads VSLRGISKTF…PANKFVAGFI (231 aa). 36 to 43 lines the ATP pocket; sequence GPSGCGKS.

Belongs to the ABC transporter superfamily. As to quaternary structure, the complex is composed of two ATP-binding proteins (BruAb2_0487), two transmembrane proteins (BruAb2_0483) and a solute-binding protein (BruAb2_0484).

The protein localises to the cell inner membrane. Probably part of an ABC transporter complex. Probably responsible for energy coupling to the transport system. The protein is Putative ATP-binding protein BruAb2_0487 of Brucella abortus biovar 1 (strain 9-941).